A 524-amino-acid chain; its full sequence is MWVTNTVLLYRPNSMNRLTFSYPTRLAHSRKASSFSRFFRSSKRKKRVTTLSTKKPDDDHEISPVPPEKFSADLGWLSAFPHVSVASMANFLFGYHIGVMNGPIVSIARELGFEGNSILEGLVVSIFIAGAFIGSIVAGPLVDKFGYRRTFQIFTIPLILGALVSAQAHSLDEILCGRFLVGLGIGVNTVLVPIYISEVAPTKYRGSLGTLCQIGTCLGIIFSLLLGIPAEDDPHWWRTMLYVASMPGFLLALGMQFAVESPRWLCKVGRLDDAKVVIRNIWGGSEVEKAVEDFQSVMKNSGSNLNSRWLELLDKPHSRVAFIGGSLFVLQQFAGINGVLYFSSLTFQNVGITSGAQASLYVGVTNFAGALCASYLIDKQGRKKLLIGSYLGMAVSMFLIVYAVGFPLDEDLSQSLSILGTLMYIFSFAIGAGPVTGLIIPELSSNRTRGKIMGFSFSVHWVSNFLVGLFFLDLVEKYGVGTVYASFGSVSLLAAAFSHLFTVETKGRSLEEIELSLNSRDDLS.

A run of 12 helical transmembrane segments spans residues 88-108 (MANF…VSIA), 122-142 (LVVS…GPLV), 151-171 (FQIF…AHSL), 179-199 (FLVG…ISEV), 208-228 (LGTL…LLGI), 239-259 (TMLY…QFAV), 320-340 (VAFI…NGVL), 357-377 (QASL…SYLI), 386-406 (LIGS…AVGF), 420-440 (GTLM…GLII), 452-472 (IMGF…LFFL), and 483-503 (VYAS…LFTV).

Belongs to the major facilitator superfamily. Sugar transporter (TC 2.A.1.1) family.

The protein localises to the plastid. It localises to the chloroplast membrane. May be involved in the efflux of glucose towards the cytosol. This chain is Probable plastidic glucose transporter 1, found in Arabidopsis thaliana (Mouse-ear cress).